The primary structure comprises 388 residues: (S)-8-oxocitronellyl enol synthase ISY1 (388 aa).

Residues 35 to 37, 63 to 64, 81 to 82, 105 to 106, and Q143 each bind NADP(+); these read TGI, RR, DV, and TW. Residues K147 and Y178 contribute to the active site. NADP(+)-binding positions include Y178, I205, and 212–214; that span reads SMM.

This sequence belongs to the short-chain dehydrogenases/reductases (SDR) family.

The catalysed reaction is (S)-8-oxocitronellyl enol + NADP(+) = (6E)-8-oxogeranial + NADPH + H(+). It carries out the reaction (S)-8-oxocitronellyl enol + NAD(+) = (6E)-8-oxogeranial + NADH + H(+). Iridoid synthase that catalyzes the first step in generation of the iridoid ring scaffold using the linear monoterpene (6E)-8-oxogeranial as substrate. Iridoids comprise a large family of distinctive bicyclic monoterpenes that possess a wide range of pharmacological activities, including anticancer, anti-inflammatory, antifungal and antibacterial activities. Catalyzes the conversion of the linear monoterpene (6E)-8-oxogeranial to (S)-8-oxocitronellyl enol, a precursor of nepetalactones, which are metabolites that are both insect-repellent and have euphoric effect in cats. The sequence is that of (S)-8-oxocitronellyl enol synthase ISY1 from Nepeta racemosa (Catmint).